We begin with the raw amino-acid sequence, 260 residues long: 6-carboxyhexanoate--CoA ligase (260 aa).

This sequence belongs to the BioW family. In terms of assembly, homodimer. Mg(2+) is required as a cofactor.

The enzyme catalyses heptanedioate + ATP + CoA = 6-carboxyhexanoyl-CoA + AMP + diphosphate. Its pathway is metabolic intermediate metabolism; pimeloyl-CoA biosynthesis; pimeloyl-CoA from pimelate: step 1/1. Functionally, catalyzes the transformation of pimelate into pimeloyl-CoA with concomitant hydrolysis of ATP to AMP. The polypeptide is 6-carboxyhexanoate--CoA ligase (Fibrobacter succinogenes (strain ATCC 19169 / S85)).